A 216-amino-acid chain; its full sequence is Cytochrome c-type protein Cgr1 (216 aa).

The helical transmembrane segment at 18–38 (WPIVVGVVVVVLIAAGAGFWV) threads the bilayer. Positions 46, 50, 51, 95, 98, 99, 142, 147, 148, 176, 179, 180, 190, 193, and 194 each coordinate heme.

The protein belongs to the multiheme cytochrome c family. As to quaternary structure, may form a membrane-associated complex with Cgr2. Binds 5 heme groups per subunit.

Its subcellular location is the cell membrane. In terms of biological role, probably transfers electrons from a membrane-associated electron donor (e.g. the membrane quinone pool) to the [4Fe-4S] cluster of the Cgr2 reductase via its covalently bound heme groups. The sequence is that of Cytochrome c-type protein Cgr1 from Eggerthella lenta (strain ATCC 25559 / DSM 2243 / CCUG 17323 / JCM 9979 / KCTC 3265 / NCTC 11813 / VPI 0255 / 1899 B) (Eubacterium lentum).